The following is a 548-amino-acid chain: Serine/threonine-protein phosphatase 2A 56 kDa regulatory subunit delta 1 isoform (548 aa).

A compositionally biased stretch (basic residues) spans 1 to 10; that stretch reads MKGIKSKMLS. The tract at residues 1–75 is disordered; that stretch reads MKGIKSKMLS…KKVPIDTTPT (75 aa). The segment covering 27 to 39 has biased composition (basic and acidic residues); that stretch reads KKSNSHDSSKAPK. Tyr-96 carries the post-translational modification Phosphotyrosine. 3 positions are modified to phosphoserine: Ser-99, Ser-109, and Ser-542.

Belongs to the phosphatase 2A regulatory subunit B family. In terms of assembly, PP2A consists of a common heterodimeric core enzyme, composed of a 36 kDa catalytic subunit (subunit C) and a 65 kDa constant regulatory subunit (PR65 or subunit A), that associates with a variety of regulatory subunits. Proteins that associate with the core dimer include three families of regulatory subunits B (the R2/B/PR55/B55, R3/B''/PR72/PR130/PR59 and R5/B'/B56 families), the 48 kDa variable regulatory subunit, viral proteins, and cell signaling molecules.

It localises to the cytoplasm. Its subcellular location is the nucleus. The B regulatory subunit might modulate substrate selectivity and catalytic activity, and might also direct the localization of the catalytic enzyme to a particular subcellular compartment. Has a role in cell shape control and septum formation. The chain is Serine/threonine-protein phosphatase 2A 56 kDa regulatory subunit delta 1 isoform (par1) from Schizosaccharomyces pombe (strain 972 / ATCC 24843) (Fission yeast).